The primary structure comprises 426 residues: Vitamin D3 receptor (426 aa).

The nuclear receptor DNA-binding region spans 21–96; that stretch reads PRICGVCGDR…IGMMKEFILT (76 aa). 8 residues coordinate Zn(2+): Cys24, Cys27, Cys41, Cys44, Cys60, Cys66, Cys76, and Cys79. 2 NR C4-type zinc fingers span residues 24-44 and 60-84; these read CGVC…CEGC and CPFN…LKRC. The interval 97 to 126 is hinge; it reads DEEVQRKREMILKRKEEEALKDSLRPKLSE. The region spanning 127 to 422 is the NR LBD domain; sequence EQQRIITTLL…LTPLLFEVFG (296 aa). Calcitriol is bound at residue Tyr143. The tract at residues 147 to 215 is disordered; that stretch reads YSDFSQFRPP…NEEDSDDPSV (69 aa). Over residues 175 to 191 the composition is skewed to low complexity; it reads SFSGNSSSSCSDHCTSS. The span at 192–204 shows a compositional bias: polar residues; that stretch reads PDTMEPTSFSNQD. Calcitriol is bound at residue Ser235. The interval 244–262 is interaction with coactivator LXXLL motif; the sequence is KMIPGFRDLTPEDQIVLLK. Residues Arg272, Ser276, His304, and His396 each coordinate calcitriol. The 9aaTAD motif lies at 415-423; it reads PLLFEVFGN.

This sequence belongs to the nuclear hormone receptor family. NR1 subfamily. In terms of assembly, homodimer in the absence of bound vitamin D3. Heterodimer with RXRA after vitamin D3 binding. Interacts with MED1, NCOA1, NCOA2, NCOA3 and NCOA6 coactivators, leading to a strong increase of transcription of target genes. Interacts with the corepressor NCOR1. Interacts with SNW1. Interacts with IRX4, the interaction does not affect its transactivation activity. Interacts with CRY1. Interacts with CRY2 in a ligand-dependent manner. In terms of processing, ubiquitinated by UBR5, leading to its degradation: UBR5 specifically recognizes and binds ligand-bound VDR when it is not associated with coactivators (NCOAs). In presence of NCOAs, the UBR5-degron is not accessible, preventing its ubiquitination and degradation. In terms of tissue distribution, mammary gland, expression increases during lactation. Also found in colon, expression is down-regulated at parturition.

The protein localises to the nucleus. The protein resides in the cytoplasm. Nuclear receptor for calcitriol, the active form of vitamin D3 which mediates the action of this vitamin on cells. Enters the nucleus upon vitamin D3 binding where it forms heterodimers with the retinoid X receptor/RXR. The VDR-RXR heterodimers bind to specific response elements on DNA and activate the transcription of vitamin D3-responsive target genes. Plays a central role in calcium homeostasis. Also functions as a receptor for the secondary bile acid lithocholic acid (LCA) and its metabolites. This Bos taurus (Bovine) protein is Vitamin D3 receptor (VDR).